Consider the following 281-residue polypeptide: Protein EMBRYO DEFECTIVE 1674 (281 aa).

Composition is skewed to polar residues over residues 1–14 (MTTT…QSLS) and 24–41 (PNTS…PNSS). The segment at 1–47 (MTTTRAKSKFQSLSACRFTPLPEPNTSPSTYSKTLPKPNSSPGTDGT) is disordered. The 88-residue stretch at 66-153 (VTLSDWWLTK…LGFPYDWEDY (88 aa)) folds into the SANTA domain.

Required for normal embryo development. The protein is Protein EMBRYO DEFECTIVE 1674 of Arabidopsis thaliana (Mouse-ear cress).